We begin with the raw amino-acid sequence, 294 residues long: Cytidine deaminase (294 aa).

2 consecutive CMP/dCMP-type deaminase domains span residues 48–168 (DDDA…FGPT) and 187–294 (AETD…RVTF). Position 89–91 (89–91 (NME)) interacts with substrate. Residue His102 coordinates Zn(2+). The active-site Proton donor is Glu104. Zn(2+) is bound by residues Cys129 and Cys132.

This sequence belongs to the cytidine and deoxycytidylate deaminase family. As to quaternary structure, homodimer. Zn(2+) is required as a cofactor.

It carries out the reaction cytidine + H2O + H(+) = uridine + NH4(+). It catalyses the reaction 2'-deoxycytidine + H2O + H(+) = 2'-deoxyuridine + NH4(+). In terms of biological role, this enzyme scavenges exogenous and endogenous cytidine and 2'-deoxycytidine for UMP synthesis. This is Cytidine deaminase from Yersinia pseudotuberculosis serotype IB (strain PB1/+).